The primary structure comprises 82 residues: Beta-insect toxin AaBTxL1 (82 aa).

The first 22 residues, Met1 to Gly22, serve as a signal peptide directing secretion. The region spanning Val25–Ile82 is the LCN-type CS-alpha/beta domain. 3 disulfide bridges follow: Cys40–Cys64, Cys50–Cys69, and Cys54–Cys71.

This sequence belongs to the long (3 C-C) scorpion toxin superfamily. Sodium channel inhibitor family. Beta subfamily. As to expression, expressed by the venom gland.

The protein resides in the secreted. Functionally, shifts the voltage of activation of para/tipE voltage-dependent sodium channels (Nav) toward more negative potentials. The sequence is that of Beta-insect toxin AaBTxL1 from Androctonus australis (Sahara scorpion).